A 130-amino-acid chain; its full sequence is Putative ankyrin repeat protein R886 (130 aa).

ANK repeat units follow at residues 21 to 50, 54 to 83, and 85 to 113; these read NYDRTIINSSEYGNFEIVKYLIDNGADITA, YGFTPLDLSSKNGHYEIVKLLVECRASIIK, and DNLTLILASENGHIKIVKLLVENGADIRY.

In Acanthamoeba polyphaga (Amoeba), this protein is Putative ankyrin repeat protein R886.